The primary structure comprises 83 residues: Cytochrome b559 subunit alpha (83 aa).

Residues 21–35 (VIHSITIPSLFIAGW) traverse the membrane as a helical segment. A heme-binding site is contributed by histidine 23.

This sequence belongs to the PsbE/PsbF family. As to quaternary structure, heterodimer of an alpha subunit and a beta subunit. PSII is composed of 1 copy each of membrane proteins PsbA, PsbB, PsbC, PsbD, PsbE, PsbF, PsbH, PsbI, PsbJ, PsbK, PsbL, PsbM, PsbT, PsbX, PsbY, PsbZ, Psb30/Ycf12, at least 3 peripheral proteins of the oxygen-evolving complex and a large number of cofactors. It forms dimeric complexes. Heme b is required as a cofactor.

The protein localises to the plastid. It is found in the chloroplast thylakoid membrane. Its function is as follows. This b-type cytochrome is tightly associated with the reaction center of photosystem II (PSII). PSII is a light-driven water:plastoquinone oxidoreductase that uses light energy to abstract electrons from H(2)O, generating O(2) and a proton gradient subsequently used for ATP formation. It consists of a core antenna complex that captures photons, and an electron transfer chain that converts photonic excitation into a charge separation. This Mesembryanthemum crystallinum (Common ice plant) protein is Cytochrome b559 subunit alpha.